A 238-amino-acid polypeptide reads, in one-letter code: uncharacterized protein (238 aa).

A disordered region spans residues 219 to 238; the sequence is EESINNNVDDTDDIDNDNFI. The span at 227-238 shows a compositional bias: acidic residues; it reads DDTDDIDNDNFI.

This is an uncharacterized protein from Buchnera aphidicola subsp. Acyrthosiphon pisum (strain APS) (Acyrthosiphon pisum symbiotic bacterium).